Here is a 251-residue protein sequence, read N- to C-terminus: uncharacterized protein (251 aa).

Positions 6, 8, 90, 130, 154, and 202 each coordinate a divalent metal cation.

It belongs to the metallo-dependent hydrolases superfamily. TatD-type hydrolase family. The cofactor is a divalent metal cation.

This is an uncharacterized protein from Haemophilus influenzae (strain ATCC 51907 / DSM 11121 / KW20 / Rd).